We begin with the raw amino-acid sequence, 313 residues long: Malate dehydrogenase (313 aa).

Residues 11-16 and aspartate 35 contribute to the NAD(+) site; that span reads GAGNIG. The substrate site is built by arginine 84 and arginine 90. NAD(+)-binding positions include asparagine 97 and 120 to 122; that span reads VTN. Residues asparagine 122 and arginine 153 each contribute to the substrate site. Histidine 177 serves as the catalytic Proton acceptor.

This sequence belongs to the LDH/MDH superfamily. MDH type 3 family.

It catalyses the reaction (S)-malate + NAD(+) = oxaloacetate + NADH + H(+). Functionally, catalyzes the reversible oxidation of malate to oxaloacetate. The protein is Malate dehydrogenase of Ehrlichia canis (strain Jake).